We begin with the raw amino-acid sequence, 662 residues long: Probable lysophospholipase 3 (662 aa).

The first 19 residues, 1–19 (MLFNCFGILALLQILPALA), serve as a signal peptide directing secretion. N-linked (GlcNAc...) asparagine glycans are attached at residues Asn74, Asn127, Asn162, Asn196, Asn266, Asn274, Asn303, Asn376, Asn406, Asn411, Asn483, Asn518, Asn523, Asn547, Asn556, Asn574, Asn596, and Asn613. One can recognise a PLA2c domain in the interval 76-617 (TCPSDYMLRP…EQYCWNGTTV (542 aa)).

This sequence belongs to the lysophospholipase family.

The protein resides in the secreted. The enzyme catalyses a 1-acyl-sn-glycero-3-phosphocholine + H2O = sn-glycerol 3-phosphocholine + a fatty acid + H(+). In terms of biological role, catalyzes the release of fatty acids from lysophospholipids. The polypeptide is Probable lysophospholipase 3 (plb3) (Schizosaccharomyces pombe (strain 972 / ATCC 24843) (Fission yeast)).